The primary structure comprises 198 residues: FMN-dependent NADH:quinone oxidoreductase (198 aa).

96–99 (MYNF) serves as a coordination point for FMN.

It belongs to the azoreductase type 1 family. In terms of assembly, homodimer. The cofactor is FMN.

The catalysed reaction is 2 a quinone + NADH + H(+) = 2 a 1,4-benzosemiquinone + NAD(+). It catalyses the reaction N,N-dimethyl-1,4-phenylenediamine + anthranilate + 2 NAD(+) = 2-(4-dimethylaminophenyl)diazenylbenzoate + 2 NADH + 2 H(+). Functionally, quinone reductase that provides resistance to thiol-specific stress caused by electrophilic quinones. Its function is as follows. Also exhibits azoreductase activity. Catalyzes the reductive cleavage of the azo bond in aromatic azo compounds to the corresponding amines. The chain is FMN-dependent NADH:quinone oxidoreductase from Burkholderia thailandensis (strain ATCC 700388 / DSM 13276 / CCUG 48851 / CIP 106301 / E264).